The primary structure comprises 448 residues: Asparagine--tRNA ligase (448 aa).

The protein belongs to the class-II aminoacyl-tRNA synthetase family. As to quaternary structure, homodimer.

The protein localises to the cytoplasm. The enzyme catalyses tRNA(Asn) + L-asparagine + ATP = L-asparaginyl-tRNA(Asn) + AMP + diphosphate + H(+). The protein is Asparagine--tRNA ligase of Streptococcus sanguinis (strain SK36).